The chain runs to 315 residues: Calumenin (315 aa).

The signal sequence occupies residues 1 to 19 (MDLRQFLLCLSLCTAFALS). Y47 bears the Phosphotyrosine mark. Phosphothreonine is present on T65. 6 EF-hand domains span residues 68–103 (ESKE…AQKR), 104–139 (WIHE…YVLD), 151–186 (QMMV…DEYD), 188–223 (MKDI…HDGN), 229–264 (WVKT…SDYD), and 265–300 (HAEA…FVGS). S69 carries the post-translational modification Phosphoserine. Ca(2+) is bound by residues D81, D83, D85, E92, D117, N119, D121, and E128. N131 carries an N-linked (GlcNAc...) asparagine glycan. D164 is a binding site for Ca(2+). Residue K165 is modified to N6-acetyllysine. Ca(2+)-binding residues include D166, D168, E175, D201, N203, D205, E212, D242, N244, D246, R248, and E253. T254 is subject to Phosphothreonine. Phosphoserine occurs at positions 261 and 277. Positions 278, 280, 282, 284, and 289 each coordinate Ca(2+). Residues 312-315 (HDEF) carry the Prevents secretion from ER motif.

Belongs to the CREC family. Interacts with GGCX.

It localises to the endoplasmic reticulum membrane. The protein localises to the golgi apparatus. Its subcellular location is the secreted. It is found in the melanosome. The protein resides in the sarcoplasmic reticulum lumen. In terms of biological role, involved in regulation of vitamin K-dependent carboxylation of multiple N-terminal glutamate residues. Seems to inhibit gamma-carboxylase GGCX. Binds 7 calcium ions with a low affinity. The protein is Calumenin (CALU) of Mesocricetus auratus (Golden hamster).